A 373-amino-acid polypeptide reads, in one-letter code: NK1 transcription factor-related protein 1 (373 aa).

Disordered stretches follow at residues 49–74 (ALPAESRETSPRHEPVPAGAPPTVHR), 149–231 (SDFT…RRAR), and 281–328 (KWKK…SMHT). Over residues 53–63 (ESRETSPRHEP) the composition is skewed to basic and acidic residues. A compositionally biased stretch (polar residues) spans 168 to 177 (EESSALTGNN). A compositionally biased stretch (low complexity) spans 196–210 (GQQTQQSSSNGQNHQ). The segment at residues 227 to 286 (PRRARTAFTYEQLVALENKFKSTRYLSVCERLNLALSLSLTETQVKIWFQNRRTKWKKQN) is a DNA-binding region (homeobox). A compositionally biased stretch (gly residues) spans 296–310 (SGGGGGNGPSNGLGG).

The protein belongs to the NK-1 homeobox family.

The protein resides in the nucleus. Functionally, may participate in the energy homeostasis regulation. The polypeptide is NK1 transcription factor-related protein 1 (Danio rerio (Zebrafish)).